The chain runs to 721 residues: Catalase-peroxidase (721 aa).

A cross-link (tryptophyl-tyrosyl-methioninium (Trp-Tyr) (with M-238)) is located at residues Trp-89–Tyr-212. Catalysis depends on His-90, which acts as the Proton acceptor. Positions Tyr-212 to Met-238 form a cross-link, tryptophyl-tyrosyl-methioninium (Tyr-Met) (with W-89). His-253 provides a ligand contact to heme b.

Belongs to the peroxidase family. Peroxidase/catalase subfamily. In terms of assembly, homodimer or homotetramer. Requires heme b as cofactor. Formation of the three residue Trp-Tyr-Met cross-link is important for the catalase, but not the peroxidase activity of the enzyme.

It carries out the reaction H2O2 + AH2 = A + 2 H2O. It catalyses the reaction 2 H2O2 = O2 + 2 H2O. In terms of biological role, bifunctional enzyme with both catalase and broad-spectrum peroxidase activity. The polypeptide is Catalase-peroxidase (Shewanella baltica (strain OS155 / ATCC BAA-1091)).